Here is a 379-residue protein sequence, read N- to C-terminus: Glutamate 5-kinase (379 aa).

An ATP-binding site is contributed by Lys15. Substrate contacts are provided by Ser59, Asp146, and Asn158. 178 to 179 (TD) contacts ATP. The 79-residue stretch at 285 to 363 (RGAVTVDVGA…SEFERLLGYS (79 aa)) folds into the PUA domain.

It belongs to the glutamate 5-kinase family.

The protein localises to the cytoplasm. The enzyme catalyses L-glutamate + ATP = L-glutamyl 5-phosphate + ADP. It functions in the pathway amino-acid biosynthesis; L-proline biosynthesis; L-glutamate 5-semialdehyde from L-glutamate: step 1/2. In terms of biological role, catalyzes the transfer of a phosphate group to glutamate to form L-glutamate 5-phosphate. The chain is Glutamate 5-kinase from Paracidovorax citrulli (strain AAC00-1) (Acidovorax citrulli).